Consider the following 687-residue polypeptide: POZ-, AT hook-, and zinc finger-containing protein 1 (687 aa).

Positions 41–130 (CDVLLRVGDE…AYTSRIVVRL (90 aa)) constitute a BTB domain. Lysine 112 is covalently cross-linked (Glycyl lysine isopeptide (Lys-Gly) (interchain with G-Cter in SUMO2)). Over residues 250–260 (PFPSVASSAPP) the composition is skewed to low complexity. Positions 250-278 (PFPSVASSAPPLTGKRGRGRPRKANLLDS) are disordered. Residues 264–276 (KRGRGRPRKANLL) constitute a DNA-binding region (a.T hook). A Glycyl lysine isopeptide (Lys-Gly) (interchain with G-Cter in SUMO2) cross-link involves residue lysine 272. The residue at position 282 (serine 282) is a Phosphoserine. A C2H2-type 1 zinc finger spans residues 292–314 (LPCGLCGKVFTDANRLRQHEAQH). Positions 332–351 (GENGLPISEDPDGPRKRSRT) are disordered. C2H2-type zinc fingers lie at residues 355-377 (VACE…KLSH), 383-405 (YSCP…VRSH), 413-436 (YICQ…KQVH), 442-464 (HKCQ…LACH), and 495-518 (NFCS…KTHH). The span at 549-558 (EGQKCSHQDP) shows a compositional bias: basic and acidic residues. The segment at 549-603 (EGQKCSHQDPIESSDSYGDLSDASDLKTPEKQSANGSFSCDMAVPKNKMESDGEK) is disordered. The C2H2-type 7 zinc finger occupies 605–628 (YPCPECGSFFRSKSYLNKHIQKVH).

This sequence belongs to the krueppel C2H2-type zinc-finger protein family. In terms of assembly, homodimer. Interacts with RNF4. Interacts (via C-terminus) with TP53; this interaction inhibits TP53 ability to activate transcription. As to expression, ubiquitous.

It is found in the nucleus. Transcriptional regulator that plays a role in many biological processes such as embryogenesis, senescence, T-cell development or neurogenesis. Interacts with the TP53 protein to control genes that are important in proliferation and in the DNA-damage response. Mechanistically, the interaction inhibits the DNA binding and transcriptional activity of TP53/p53. Part of the transcriptional network modulating regulatory T-cell development and controls the generation of the regulatory T-cell pool under homeostatic conditions. In terms of biological role, (Microbial infection) Plays a positive role in viral cDNA synthesis. This chain is POZ-, AT hook-, and zinc finger-containing protein 1 (PATZ1), found in Homo sapiens (Human).